The sequence spans 803 residues: H(+)/Cl(-) exchange transporter 7 (803 aa).

Residues 1–46 (MANVSKKVSWSGRDRDDEEGAPLLRRTGQPDEETPLLNGAGPGARQ) form a disordered region. Over 1 to 124 (MANVSKKVSW…TAFRTVEIKR (124 aa)) the chain is Cytoplasmic. A Phosphoserine modification is found at Ser9. Transmembrane regions (helical) follow at residues 125–157 (WVIC…YRVI) and 172–195 (FSLL…VAFI). The short motif at 201–205 (GSGIP) is the Selectivity filter part_1 element. Ser202 is a chloride binding site. An intramembrane region (helical) is located at residues 204 to 211 (IPQIKCFL). Transmembrane regions (helical) follow at residues 221–239 (RLKT…VVGG) and 245–262 (EGPM…ISQG). A Selectivity filter part_2 motif is present at residues 243–247 (GKEGP). 2 intramembrane regions (helical) span residues 286 to 298 (FVSA…VSAA) and 302 to 310 (PVGGVLFSL). The next 5 helical transmembrane spans lie at 320-339 (FLTW…LNFV), 373-403 (IPVF…FRIR), 408-430 (PCLQ…FVLI), 485-505 (PMTL…TYGL), and 510-533 (GVFI…MSYL). The Selectivity filter part_3 signature appears at 510-514 (GVFIP). Phe512 serves as a coordination point for chloride. An intramembrane region (helical) is located at residues 543 to 557 (GKYALMGAAAQLGGI). Residues 558-560 (VRM) constitute an intramembrane region (note=Loop between two helices). Positions 561–572 (TLSLTVIMMEAT) form an intramembrane region, helical. Residues 573–576 (SNVT) constitute an intramembrane region (note=Loop between two helices). A helical membrane pass occupies residues 577 to 595 (YGFPIMLVLMTAKIVGDVF). Residues 596 to 803 (IEGLYDMHIQ…GLEELSLAQT (208 aa)) lie on the Cytoplasmic side of the membrane. Chloride is bound at residue Tyr600. 2 CBS domains span residues 629 to 693 (MSTP…VFVE) and 739 to 797 (MNPS…GLEE). Residues 656–658 (HNG) and 781–784 (TRKD) each bind ATP. Ser799 is modified (phosphoserine).

The protein belongs to the chloride channel (TC 2.A.49) family. ClC-7/CLCN7 subfamily. In terms of assembly, chloride channel 7 are heteromers of alpha (CLCN7) and beta (OSTM1) subunits. Brain, testis, muscle and kidney.

It localises to the lysosome membrane. It carries out the reaction 2 chloride(in) + H(+)(out) = 2 chloride(out) + H(+)(in). Slowly voltage-gated channel mediating the exchange of chloride ions against protons. Functions as antiporter and contributes to the acidification of the lysosome lumen and may be involved in maintaining lysosomal pH. The CLC channel family contains both chloride channels and proton-coupled anion transporters that exchange chloride or another anion for protons. The presence of conserved gating glutamate residues is typical for family members that function as antiporters. This chain is H(+)/Cl(-) exchange transporter 7 (Clcn7), found in Rattus norvegicus (Rat).